An 86-amino-acid polypeptide reads, in one-letter code: Muscarinic toxin 7 (86 aa).

The first 21 residues, M1–T21, serve as a signal peptide directing secretion. Finger loop regions lie at residues T23–D37, L44–C63, and T66–C78. 4 disulfides stabilise this stretch: C24-C45, C38-C63, C67-C78, and C79-C84.

The protein belongs to the three-finger toxin family. Short-chain subfamily. Aminergic toxin sub-subfamily. Expressed by the venom gland.

Its subcellular location is the secreted. Binds specifically and irreversibly to an allosteric site of the muscarinic acetylcholine M1 receptor (CHRM1) at subnanomolar concentrations and shows a very slow dissociation rate. It also inhibits agonist-mediated guanosine 5'-O-(3'-thiotriphosphate) (GTP-g-S) binding and downstream signaling, and decreases the dissociation rate of orthosteric antagonists (N-methylscopolamine (NMS) or pirenzepine). Is a potent negative allosteric modulator (NAM) for CHRM1 activation and a positive allosteric modulator (PAM) for antagonist binding. In Dendroaspis angusticeps (Eastern green mamba), this protein is Muscarinic toxin 7.